Here is a 379-residue protein sequence, read N- to C-terminus: UDP-N-acetylglucosamine--N-acetylmuramyl-(pentapeptide) pyrophosphoryl-undecaprenol N-acetylglucosamine transferase (379 aa).

Residues 10 to 12 (TAG), asparagine 124, arginine 161, serine 195, and glutamine 291 each bind UDP-N-acetyl-alpha-D-glucosamine.

It belongs to the glycosyltransferase 28 family. MurG subfamily.

The protein localises to the cell membrane. The enzyme catalyses di-trans,octa-cis-undecaprenyl diphospho-N-acetyl-alpha-D-muramoyl-L-alanyl-D-glutamyl-meso-2,6-diaminopimeloyl-D-alanyl-D-alanine + UDP-N-acetyl-alpha-D-glucosamine = di-trans,octa-cis-undecaprenyl diphospho-[N-acetyl-alpha-D-glucosaminyl-(1-&gt;4)]-N-acetyl-alpha-D-muramoyl-L-alanyl-D-glutamyl-meso-2,6-diaminopimeloyl-D-alanyl-D-alanine + UDP + H(+). It functions in the pathway cell wall biogenesis; peptidoglycan biosynthesis. In terms of biological role, cell wall formation. Catalyzes the transfer of a GlcNAc subunit on undecaprenyl-pyrophosphoryl-MurNAc-pentapeptide (lipid intermediate I) to form undecaprenyl-pyrophosphoryl-MurNAc-(pentapeptide)GlcNAc (lipid intermediate II). The chain is UDP-N-acetylglucosamine--N-acetylmuramyl-(pentapeptide) pyrophosphoryl-undecaprenol N-acetylglucosamine transferase from Thermobifida fusca (strain YX).